The sequence spans 606 residues: MVEGPGCTLNGEKIRARVLPGQAVTGVRGTALQSLLGPAMSPAASLADVATSAAPMNAKDSGWKLLRLFNGYVYSGVETLGKELFMYFGPRALRIHFGMKGSILINPREGENRAGASPALAVQLTRDLICFYDSSVELRNSVESQQRVRVMEELDICSPKFSFSRAESEVKKQGDRMLCDVLLDQRVLPGVGNIIKNEALFDSGLHPAVKVCQLSDKQACHLVKMTRDFSILFYRCCKAGSAISKHCKVYKRPNCDQCHSKITVCRFGENSRMTYFCPHCQKENPQCVQVCQLPTRNTEISWTPRGEDCFTDSVARKSEEQWSCVVCTLINRPSAKACDACLTTRPLDSVLKNRENSIAFNNLVKYPCNNFENTHTEVKINRKTAFGNTTLVLTDLSNKSSALARKKRANHTIDGESQMFLPTDIGFSDSQHPSKEGINYITQPSNKVNISPTVCAQSKLFSSAHKKFKPAHTSATELKSYNSGLSNSELQTNRTRGHHSKSDGSPLCKMHHRRCVLRVVRKDGENKGRQFYACSLPRGAQCGFFEWADLSFPFCRHGKRSIMKTVLKIGPNNGKNFFVCPLEKKKQCNFFQWAENGPGMEIVPGC.

V2 acts as the Schiff-base intermediate with DNA; via amino nitrogen in catalysis. Residues N193 and R272 each contribute to the DNA site. The FPG-type zinc finger occupies 248-282; sequence KVYKRPNCDQCHSKITVCRFGENSRMTYFCPHCQK. A RanBP2-type zinc finger spans residues 318–347; that stretch reads SEEQWSCVVCTLINRPSAKACDACLTTRPL. Position 451 is a phosphoserine (S451). Residues 479–494 show a composition bias toward polar residues; it reads KSYNSGLSNSELQTNR. Residues 479-506 form a disordered region; sequence KSYNSGLSNSELQTNRTRGHHSKSDGSP. Zn(2+) is bound by residues C508, H511, C534, C542, C555, H557, C580, and C588. 2 consecutive GRF-type zinc fingers follow at residues 508–551 and 555–597; these read CKMH…ADLS and CRHG…AENG.

The protein belongs to the FPG family. As to expression, expressed in testis, thymus, spleen and bone marrow. In young mice, expressed at higher levels in thymocytes than splenocytes. At 12 dpc, abundant in the subventricular zone (SVZ) of the lateral ventricles. At 17.5 dpc and P0, expression is limited to distinct cells in the cortical SVZ, in cells of the secondary matrix, the dentate gyrus migratory route and the dentate gyrus.

The protein resides in the nucleus. It is found in the chromosome. It catalyses the reaction 2'-deoxyribonucleotide-(2'-deoxyribose 5'-phosphate)-2'-deoxyribonucleotide-DNA = a 3'-end 2'-deoxyribonucleotide-(2,3-dehydro-2,3-deoxyribose 5'-phosphate)-DNA + a 5'-end 5'-phospho-2'-deoxyribonucleoside-DNA + H(+). DNA glycosylase which prefers single-stranded DNA (ssDNA), or partially ssDNA structures such as bubble and fork structures, to double-stranded DNA (dsDNA). Mediates interstrand cross-link repair in response to replication stress: acts by mediating DNA glycosylase activity, cleaving one of the two N-glycosyl bonds comprising the interstrand cross-link, which avoids the formation of a double-strand break but generates an abasic site that is bypassed by translesion synthesis polymerases. In vitro, displays strong glycosylase activity towards the hydantoin lesions spiroiminodihydantoin (Sp) and guanidinohydantoin (Gh) in both ssDNA and dsDNA; also recognizes FapyA, FapyG, 5-OHU, 5-OHC, 5-OHMH, Tg and 8-oxoA lesions in ssDNA. No activity on 8-oxoG detected. Also shows weak DNA-(apurinic or apyrimidinic site) lyase activity. In vivo, appears to be the primary enzyme involved in removing Sp and Gh from ssDNA in neonatal tissues. This is Endonuclease 8-like 3 (Neil3) from Mus musculus (Mouse).